The primary structure comprises 481 residues: Protein JASON (481 aa).

Residues 226–250 form a disordered region; that stretch reads ECDLDQSNSSNSSENGSSRKPEMGG. Over residues 232 to 241 the composition is skewed to low complexity; sequence SNSSNSSENG.

Required for normal spindle orientation at male meiosis II and normal formation of tetrad of microspores. Acts as a positive regulator of PS1 in male sporogenesis. Not involved in female meiosis. This Arabidopsis thaliana (Mouse-ear cress) protein is Protein JASON.